The sequence spans 1117 residues: MEILWKTLTWILSLIMASSEFHSDHRLSYSSQEEFLTYLEHYQLTIPIRVDQNGAFLSFTVKNDKHSRRRRSMDPIDPQQAVSKLFFKLSAYGKHFHLNLTLNTDFVSKHFTVEYWGKDGPQWKHDFLDNCHYTGYLQDQRSTTKVALSNCVGLHGVIATEDEEYFIEPLKNTTEDSKHFSYENGHPHVIYKKSALQQRHLYDHSHCGVSDFTRSGKPWWLNDTSTVSYSLPINNTHIHHRQKRSVSIERFVETLVVADKMMVGYHGRKDIEHYILSVMNIVAKLYRDSSLGNVVNIIVARLIVLTEDQPNLEINHHADKSLDSFCKWQKSILSHQSDGNTIPENGIAHHDNAVLITRYDICTYKNKPCGTLGLASVAGMCEPERSCSINEDIGLGSAFTIAHEIGHNFGMNHDGIGNSCGTKGHEAAKLMAAHITANTNPFSWSACSRDYITSFLDSGRGTCLDNEPPKRDFLYPAVAPGQVYDADEQCRFQYGATSRQCKYGEVCRELWCLSKSNRCVTNSIPAAEGTLCQTGNIEKGWCYQGDCVPFGTWPQSIDGGWGPWSLWGECSRTCGGGVSSSLRHCDSPAPSGGGKYCLGERKRYRSCNTDPCPLGSRDFREKQCADFDNMPFRGKYYNWKPYTGGGVKPCALNCLAEGYNFYTERAPAVIDGTQCNADSLDICINGECKHVGCDNILGSDAREDRCRVCGGDGSTCDAIEGFFNDSLPRGGYMEVVQIPRGSVHIEVREVAMSKNYIALKSEGDDYYINGAWTIDWPRKFDVAGTAFHYKRPTDEPESLEALGPTSENLIVMVLLQEQNLGIRYKFNVPITRTGSGDNEVGFTWNHQPWSECSATCAGGVQRQEVVCKRLDDNSIVQNNYCDPDSKPPENQRACNTEPCPPEWFIGDWLECSKTCDGGMRTRAVLCIRKIGPSEEETLDYSGCLTHRPVEKEPCNNQSCPPQWVALDWSECTPKCGPGFKHRIVLCKSSDLSKTFPAAQCPEESKPPVRIRCSLGRCPPPRWVTGDWGQCSAQCGLGQQMRTVQCLSYTGQASSDCLETVRPPSMQQCESKCDSTPISNTEECKDVNKVAYCPLVLKFKFCSRAYFRQMCCKTCQGH.

A signal peptide spans 1–21 (MEILWKTLTWILSLIMASSEF). A propeptide spanning residues 22 to 244 (HSDHRLSYSS…NTHIHHRQKR (223 aa)) is cleaved from the precursor. N-linked (GlcNAc...) asparagine glycans are attached at residues asparagine 99, asparagine 172, asparagine 222, and asparagine 234. The Peptidase M12B domain occupies 250 to 468 (RFVETLVVAD…GRGTCLDNEP (219 aa)). Disulfide bonds link cysteine 326-cysteine 387, cysteine 362-cysteine 369, cysteine 381-cysteine 463, cysteine 420-cysteine 447, cysteine 490-cysteine 512, cysteine 501-cysteine 519, cysteine 507-cysteine 542, cysteine 532-cysteine 547, cysteine 570-cysteine 607, cysteine 574-cysteine 612, and cysteine 585-cysteine 597. Histidine 403 provides a ligand contact to Zn(2+). The active site involves glutamate 404. The Zn(2+) site is built by histidine 407 and histidine 413. The 63-residue stretch at 495-557 (GATSRQCKYG…VPFGTWPQSI (63 aa)) folds into the Disintegrin domain. Residues 558–613 (DGGWGPWSLWGECSRTCGGGVSSSLRHCDSPAPSGGGKYCLGERKRYRSCNTDPCP) enclose the TSP type-1 1 domain. Positions 717-843 (DAIEGFFNDS…GSGDNEVGFT (127 aa)) are spacer. N-linked (GlcNAc...) asparagine glycosylation occurs at asparagine 724. 4 TSP type-1 domains span residues 840–900 (VGFT…EPCP), 902–960 (EWFI…QSCP), 962–1007 (QWVA…SKPP), and 1018–1073 (PPPR…SKCD). 3 disulfides stabilise this stretch: cysteine 911/cysteine 954, cysteine 915/cysteine 959, and cysteine 926/cysteine 943. The N-linked (GlcNAc...) asparagine glycan is linked to asparagine 956. Residues 1079–1117 (NTEECKDVNKVAYCPLVLKFKFCSRAYFRQMCCKTCQGH) enclose the PLAC domain.

It depends on Zn(2+) as a cofactor. In terms of processing, the precursor is cleaved by a furin endopeptidase. Post-translationally, glycosylated. Can be O-fucosylated by POFUT2 on a serine or a threonine residue found within the consensus sequence C1-X(2)-(S/T)-C2-G of the TSP type-1 repeat domains where C1 and C2 are the first and second cysteine residue of the repeat, respectively. Fucosylated repeats can then be further glycosylated by the addition of a beta-1,3-glucose residue by the glucosyltransferase, B3GALTL. Fucosylation mediates the efficient secretion of ADAMTS family members. Can also be C-glycosylated with one or two mannose molecules on tryptophan residues within the consensus sequence W-X-X-W of the TPRs, and N-glycosylated. These other glycosylations can also facilitate secretion. In terms of tissue distribution, expressed at low levels in placenta and barely detectable in a number of other tissues.

The protein localises to the secreted. It is found in the extracellular space. It localises to the extracellular matrix. The chain is A disintegrin and metalloproteinase with thrombospondin motifs 6 (ADAMTS6) from Homo sapiens (Human).